Consider the following 148-residue polypeptide: Endoribonuclease YbeY (148 aa).

Residues His-113, His-117, and His-123 each contribute to the Zn(2+) site.

This sequence belongs to the endoribonuclease YbeY family. Zn(2+) is required as a cofactor.

The protein resides in the cytoplasm. In terms of biological role, single strand-specific metallo-endoribonuclease involved in late-stage 70S ribosome quality control and in maturation of the 3' terminus of the 16S rRNA. This chain is Endoribonuclease YbeY, found in Borrelia recurrentis (strain A1).